The sequence spans 552 residues: CTP synthase (552 aa).

The amidoligase domain stretch occupies residues 1–270 (MTKYVFVTGG…DRIICEELKL (270 aa)). Residue Ser-13 coordinates CTP. Ser-13 is a binding site for UTP. ATP is bound by residues 14–19 (SLGKGI) and Asp-71. Asp-71 and Glu-144 together coordinate Mg(2+). CTP is bound by residues 151 to 153 (DIE), 191 to 196 (KTKPTQ), and Lys-227. UTP is bound by residues 191–196 (KTKPTQ) and Lys-227. Residues 295 to 547 (TIGMVGKYVD…VEAAFANKQA (253 aa)) enclose the Glutamine amidotransferase type-1 domain. Gly-356 is an L-glutamine binding site. The active-site Nucleophile; for glutamine hydrolysis is Cys-383. Residues 384-387 (LGMQ), Glu-407, and Arg-473 contribute to the L-glutamine site. Catalysis depends on residues His-520 and Glu-522.

This sequence belongs to the CTP synthase family. As to quaternary structure, homotetramer.

It catalyses the reaction UTP + L-glutamine + ATP + H2O = CTP + L-glutamate + ADP + phosphate + 2 H(+). The enzyme catalyses L-glutamine + H2O = L-glutamate + NH4(+). The catalysed reaction is UTP + NH4(+) + ATP = CTP + ADP + phosphate + 2 H(+). It functions in the pathway pyrimidine metabolism; CTP biosynthesis via de novo pathway; CTP from UDP: step 2/2. Allosterically activated by GTP, when glutamine is the substrate; GTP has no effect on the reaction when ammonia is the substrate. The allosteric effector GTP functions by stabilizing the protein conformation that binds the tetrahedral intermediate(s) formed during glutamine hydrolysis. Inhibited by the product CTP, via allosteric rather than competitive inhibition. Functionally, catalyzes the ATP-dependent amination of UTP to CTP with either L-glutamine or ammonia as the source of nitrogen. Regulates intracellular CTP levels through interactions with the four ribonucleotide triphosphates. This chain is CTP synthase, found in Burkholderia ambifaria (strain ATCC BAA-244 / DSM 16087 / CCUG 44356 / LMG 19182 / AMMD) (Burkholderia cepacia (strain AMMD)).